Consider the following 349-residue polypeptide: DNA fragmentation factor subunit beta (349 aa).

Positions 7–83 constitute a CIDE-N domain; that stretch reads QPKCVKLRAL…LLTAGETWHG (77 aa). The segment at 319–349 is disordered; sequence RSRIYRPQTGSRRKQPPRKQPPRKRPPRKRQ. Residues 329-349 are compositionally biased toward basic residues; sequence SRRKQPPRKQPPRKRPPRKRQ.

Heterodimer of DFFA and DFFB. Interacts with H1-1.

The protein localises to the cytoplasm. Its subcellular location is the nucleus. Inhibited by DFFA (DFF45). In terms of biological role, nuclease that induces DNA fragmentation and chromatin condensation during apoptosis. Degrades naked DNA and induces apoptotic morphology. In Rattus norvegicus (Rat), this protein is DNA fragmentation factor subunit beta (Dffb).